The sequence spans 197 residues: ATP-dependent Clp protease proteolytic subunit (197 aa).

The Nucleophile role is filled by serine 98. The active site involves histidine 123.

It belongs to the peptidase S14 family. In terms of assembly, fourteen ClpP subunits assemble into 2 heptameric rings which stack back to back to give a disk-like structure with a central cavity, resembling the structure of eukaryotic proteasomes. Forms large heterooligomeric complexes consisting of an ATPase component (ClpX, ClpC or ClpE) and a proteolytic component (ClpP).

It is found in the cytoplasm. It catalyses the reaction Hydrolysis of proteins to small peptides in the presence of ATP and magnesium. alpha-casein is the usual test substrate. In the absence of ATP, only oligopeptides shorter than five residues are hydrolyzed (such as succinyl-Leu-Tyr-|-NHMec, and Leu-Tyr-Leu-|-Tyr-Trp, in which cleavage of the -Tyr-|-Leu- and -Tyr-|-Trp bonds also occurs).. With respect to regulation, low intrinsic peptidase activity is stimulated by ATP-binding subunits ClpC, ClpE and ClpX. Activity is disregulated by acyldepsipeptides (ADEP) antibiotics, which negate the need for ATP-binding subunits for activation and which makes it into an unregulated protease. Each ClpP subunit binds 1 ADEP molecule, which prevents binding of ClpX. ADEP binding causes conformational shifts that open the gated pore of the ring. Protease activity is inhibited by diisopropylfluoro-phosphate. Protease activity is inhibited by bortezomib, an oncology drug originally designed to work on the human proteasome. Cleaves peptides in various proteins in a process that requires ATP hydrolysis. Has a limited peptidase activity in the absence of ATP-binding subunits ClpC, ClpE or ClpX. Has a chymotrypsin-like activity. Plays a major role in the degradation of misfolded proteins. ClpXP is involved in the complete degradation of the site-2 clipped anti-sigma-W factor RsiW. This results in the release of SigW and the transcriptional activation of genes under the control of the sigma-W factor. Probably the major protease that degrades proteins tagged by trans-translation. The polypeptide is ATP-dependent Clp protease proteolytic subunit (Bacillus subtilis (strain 168)).